The sequence spans 427 residues: Peptidase B (427 aa).

Positions 195 and 200 each coordinate Mn(2+). Residue K207 is part of the active site. Mn(2+)-binding residues include D218, D277, and E279. The active site involves R281.

This sequence belongs to the peptidase M17 family. Homohexamer. It depends on Mn(2+) as a cofactor.

It localises to the cytoplasm. The catalysed reaction is Release of an N-terminal amino acid, Xaa, from a peptide or arylamide. Xaa is preferably Glu or Asp but may be other amino acids, including Leu, Met, His, Cys and Gln.. In terms of biological role, probably plays an important role in intracellular peptide degradation. This Escherichia coli O7:K1 (strain IAI39 / ExPEC) protein is Peptidase B.